A 77-amino-acid chain; its full sequence is U8-lycotoxin-Ls1o (77 aa).

Positions 1-20 are cleaved as a signal peptide; the sequence is MKLMIFTGLVLFAIVSLIEA. Residues 21–26 constitute a propeptide that is removed on maturation; the sequence is QAENGK.

It belongs to the neurotoxin 19 (CSTX) family. 08 (U8-Lctx) subfamily. Contains 4 disulfide bonds. As to expression, expressed by the venom gland.

Its subcellular location is the secreted. The chain is U8-lycotoxin-Ls1o from Lycosa singoriensis (Wolf spider).